The chain runs to 1689 residues: Cullin-7 (1689 aa).

Positions 349 to 422 constitute a CPH domain; it reads RASFASFNTY…HWHMLEILGF (74 aa). The DOC domain maps to 793-972; it reads PIQIPFFDVF…HTRLFYMVRA (180 aa). Basic and acidic residues predominate over residues 1321–1337; it reads VAHEDSGREDKSKKEEA. The tract at residues 1321-1371 is disordered; the sequence is VAHEDSGREDKSKKEEAIGEAAAVAMAEEEDQGKKEEGEEEGEGEDEEEER. A compositionally biased stretch (acidic residues) spans 1358-1370; the sequence is GEEEGEGEDEEEE. Lys-1567 participates in a covalent cross-link: Glycyl lysine isopeptide (Lys-Gly) (interchain with G-Cter in NEDD8).

The protein belongs to the cullin family. As to quaternary structure, component of the 3M complex, composed of core components CUL7, CCDC8 and OBSL1. Component of the Cul7-RING(FBXW8) complex consisting of CUL7, RBX1, SKP1 and FBXW8. Within the Cul7-RING(FBXW8) complex interacts with FBXW8 and RBX1, but not with SKP1. Interacts with CUL1 (via the C-terminal domain); the interaction seems to be mediated by FBXW8; it is likely specific to FBXW8, but not other F-box proteins. Interacts (via the CPH domain) with p53/TP53; the interaction preferentially involves tetrameric and dimeric p53/TP53; this interaction recruits p53/TP53 for ubiquitination by neddylated CUL1-RBX1. The CUL7-CUL9 heterodimer seems to interact specifically with p53/TP53. Interacts with FBXW8; interaction is mutually exclusive of binding to CUL9 or p53/TP53. Interacts with CUL9; leading to inhibited CUL9 activity. Interacts with OBSL1. Interacts (as part of the 3M complex) with HDAC4 and HDAC5; it is negatively regulated by ANKRA2.

Its subcellular location is the cytoplasm. The protein resides in the cytoskeleton. It is found in the microtubule organizing center. It localises to the centrosome. The protein localises to the perinuclear region. Its subcellular location is the golgi apparatus. The protein operates within protein modification; protein ubiquitination. Core component of the 3M and Cul7-RING(FBXW8) complexes, which mediate the ubiquitination and subsequent proteasomal degradation of target proteins. Core component of the 3M complex, a complex required to regulate microtubule dynamics and genome integrity. It is unclear how the 3M complex regulates microtubules, it could act by controlling the level of a microtubule stabilizer. The Cul7-RING(FBXW8) complex alone lacks ubiquitination activity and does not promote polyubiquitination and proteasomal degradation of p53/TP53. However it mediates recruitment of p53/TP53 for ubiquitination by neddylated CUL1-RBX1. Interaction with CUL9 is required to inhibit CUL9 activity and ubiquitination of BIRC5. The Cul7-RING(FBXW8) complex also mediates ubiquitination and consequent degradation of target proteins such as GORASP1, IRS1 and MAP4K1/HPK1. Ubiquitination of GORASP1 regulates Golgi morphogenesis and dendrite patterning in brain. Mediates ubiquitination and degradation of IRS1 in a mTOR-dependent manner: the Cul7-RING(FBXW8) complex recognizes and binds IRS1 previously phosphorylated by S6 kinase (RPS6KB1 or RPS6KB2). The Cul7-RING(FBXW8) complex also mediates ubiquitination of MAP4K1/HPK1: recognizes and binds autophosphorylated MAP4K1/HPK1, leading to its degradation, thereby affecting cell proliferation and differentiation. Acts as a regulator in trophoblast cell epithelial-mesenchymal transition and placental development. While the Cul7-RING(FBXW8) and the 3M complexes are associated and involved in common processes, CUL7 and the Cul7-RING(FBXW8) complex may have additional functions. Probably plays a role in the degradation of proteins involved in endothelial proliferation and/or differentiation. The chain is Cullin-7 (Cul7) from Mus musculus (Mouse).